A 360-amino-acid chain; its full sequence is Phospho-N-acetylmuramoyl-pentapeptide-transferase (360 aa).

The next 10 membrane-spanning stretches (helical) occupy residues 27-47, 70-90, 98-118, 134-154, 168-188, 199-219, 239-259, 263-283, 288-308, and 337-357; these read GALF…ISLL, GTPT…ILLW, VWVT…DDYL, LLLE…YSPA, ALLN…VGAG, GLAI…AYLV, LAVV…FNAP, IFMG…IAVA, IVLA…IIQV, and QVVI…LATL.

This sequence belongs to the glycosyltransferase 4 family. MraY subfamily. It depends on Mg(2+) as a cofactor.

Its subcellular location is the cell inner membrane. The enzyme catalyses UDP-N-acetyl-alpha-D-muramoyl-L-alanyl-gamma-D-glutamyl-meso-2,6-diaminopimeloyl-D-alanyl-D-alanine + di-trans,octa-cis-undecaprenyl phosphate = di-trans,octa-cis-undecaprenyl diphospho-N-acetyl-alpha-D-muramoyl-L-alanyl-D-glutamyl-meso-2,6-diaminopimeloyl-D-alanyl-D-alanine + UMP. The protein operates within cell wall biogenesis; peptidoglycan biosynthesis. In terms of biological role, catalyzes the initial step of the lipid cycle reactions in the biosynthesis of the cell wall peptidoglycan: transfers peptidoglycan precursor phospho-MurNAc-pentapeptide from UDP-MurNAc-pentapeptide onto the lipid carrier undecaprenyl phosphate, yielding undecaprenyl-pyrophosphoryl-MurNAc-pentapeptide, known as lipid I. The protein is Phospho-N-acetylmuramoyl-pentapeptide-transferase of Methylorubrum populi (strain ATCC BAA-705 / NCIMB 13946 / BJ001) (Methylobacterium populi).